A 237-amino-acid chain; its full sequence is tRNA(His) guanylyltransferase (237 aa).

An N-acetylalanine modification is found at alanine 2. 2 residues coordinate Mg(2+): aspartate 29 and glycine 30. Residues lysine 32, phenylalanine 33, histidine 34, lysine 44, and aspartate 47 each coordinate GTP. Residue aspartate 77 coordinates Mg(2+).

Belongs to the tRNA(His) guanylyltransferase family. As to quaternary structure, homotetramer. Mg(2+) serves as cofactor.

It catalyses the reaction a 5'-end ribonucleotide-tRNA(His) + GTP + ATP + H2O = a 5'-end phospho-guanosine-ribonucleotide-tRNA(His) + AMP + 2 diphosphate + H(+). The catalysed reaction is a 5'-end ribonucleotide-RNA + a ribonucleoside 5'-triphosphate + ATP + H2O = a 5'-end phospho-ribonucleoside-ribonucleotide-RNA + AMP + 2 diphosphate + H(+). Its function is as follows. Acts as a tRNA(His) guanylyltransferase that catalyzes 3'-5' addition of a single guanosine residue to the -1 position of tRNA(His), to form a non-Watson-Crick G(-1):A-73 base pair. After addition of G(-1), THG1 removes pyrophosphate from the tRNA 5'-end, generating 5'-monophosphorylated G(-1)-containing tRNA which is important for recognition of tRNA(His) by its cognate histidyl-tRNA synthetase. In addition to the single-G(-1) addition reaction, THG1 polymerizes multiple G residues to the 5'-end of tRNA(His) variants using the 3'-end of the tRNA(His) acceptor stem as a template. The protein is tRNA(His) guanylyltransferase of Saccharomyces cerevisiae (strain ATCC 204508 / S288c) (Baker's yeast).